The sequence spans 1680 residues: Sodium channel protein type 7 subunit alpha (1680 aa).

At 1-117 the chain is on the cytoplasmic side; the sequence is MLTSPEPKGL…RRAVIKVLVH (117 aa). The I repeat unit spans residues 100-401; the sequence is TLSPLSSLRR…ILTMAYEQEK (302 aa). Residues 118 to 137 traverse the membrane as a helical segment; that stretch reads PLFRLLILISVLTDSILMCM. At 138-141 the chain is on the extracellular side; sequence SNLP. The helical transmembrane segment at 142–167 threads the bilayer; that stretch reads EWILAVENTLLGIYTFEILVKVIARG. At 168–178 the chain is on the cytoplasmic side; sequence IWAGSFSFLGD. The chain crosses the membrane as a helical span at residues 179-196; sequence LWNWLDFSVTLFELITRS. Residues 197-200 lie on the Extracellular side of the membrane; sequence SPLS. Residues 201-219 traverse the membrane as a helical segment; it reads SLPMFKTIRTLRILKIIPL. Topologically, residues 220–237 are cytoplasmic; sequence NHGLQSIVVTLVQCLKKL. A helical membrane pass occupies residues 238 to 259; that stretch reads LGAIALALFFLTVSSLFGMGLF. Over 260-338 the chain is Extracellular; the sequence is MGNLKHKCVR…PDNGFTSFDN (79 aa). C267 and C307 form a disulfide bridge. N-linked (GlcNAc...) asparagine glycans are attached at residues N281 and N309. An intramembrane region (pore-forming) is located at residues 339–366; it reads FGWALLAMFRLMTQDYPELLYHQILYAS. Position 367 (G367) is a topological domain, extracellular. A helical membrane pass occupies residues 368 to 407; it reads KIYMIFFVLISFWFAFYMASLFLGILTMAYEQEKQRASEE. The Cytoplasmic portion of the chain corresponds to 408–505; the sequence is SRDMDSKCHQ…EFADRIITHP (98 aa). Residues 487-756 form an II repeat; sequence CSPCWIKLNE…QLAVAWIKMV (270 aa). The chain crosses the membrane as a helical span at residues 506–521; that stretch reads LFDLFLVICIILNICF. The Extracellular segment spans residues 522 to 530; the sequence is LALEHFPMS. Residues 531–559 traverse the membrane as a helical segment; sequence EELMSLLAIGNLVFIGIYTIEMILKIIAM. At 560–568 the chain is on the cytoplasmic side; that stretch reads HPYGYFQIS. Residues 569-586 traverse the membrane as a helical segment; that stretch reads WHIFDSILVVLGLTEMLL. Residues 587 to 592 lie on the Extracellular side of the membrane; the sequence is ADIEEI. Residues 593–608 form a helical membrane-spanning segment; the sequence is TVFILVPLIFIKLGKY. Residues 609–625 are Cytoplasmic-facing; that stretch reads APPFKNLMRILGRALVA. Residues 626 to 654 form a helical membrane-spanning segment; the sequence is LKDLVLLVSIFIYFSAVFGMKLFGRSYKD. Residues 655–672 are Extracellular-facing; sequence CVCHVDQDCQRQRWHMSD. 2 cysteine pairs are disulfide-bonded: C657–C663 and C695–C704. The pore-forming intramembrane region spans 673–699; it reads FLHAYVTVFRILCGEWIETLWECMEVA. Position 700 (G700) is a topological domain, extracellular. Residues 701–731 form a helical membrane-spanning segment; it reads EAWCIPFYMMVILIGNLLILYLFVALVSSFA. Over 732–933 the chain is Cytoplasmic; sequence SYDATTEVSK…KTCCKIVENS (202 aa). The segment covering 807–833 has biased composition (polar residues); sequence DQSSGTEKTPVTESESQSLIASPSVSE. The segment at 807–874 is disordered; that stretch reads DQSSGTEKTP…MKQSSSSECS (68 aa). S842 carries the phosphoserine modification. Residues 915–1223 form an III repeat; that stretch reads NGKIWRNIRK…KKQYRALKKL (309 aa). The chain crosses the membrane as a helical span at residues 934-952; that stretch reads WFECFIGLVTLLCTGTLAL. The Extracellular portion of the chain corresponds to 953-960; that stretch reads EDIYIDQR. A helical membrane pass occupies residues 961-989; that stretch reads KTIKIFLEYGDMIFAYIFILEMLLKWVAY. At 990-997 the chain is on the cytoplasmic side; the sequence is GFKAYFSN. The chain crosses the membrane as a helical span at residues 998-1019; sequence NWYKLDFMVVIVLCLSLIGKTR. A topological domain (extracellular) is located at residue E1020. Residues 1021–1039 form a helical membrane-spanning segment; it reads DLNPLASIKFLRALRVLSQ. Residues 1040 to 1054 are Cytoplasmic-facing; the sequence is FERMKVVLRALIKTT. Residues 1055–1079 traverse the membrane as a helical segment; it reads LPAVSVFLVCLMIWLLFSVMGVFLF. Topologically, residues 1080-1126 are extracellular; that stretch reads AGKFYECIDPTRGERFSVFEVMNKSQCENLVFNESMPWENAKLNFDN. A disulfide bridge links C1086 with C1106. 2 N-linked (GlcNAc...) asparagine glycosylation sites follow: N1102 and N1112. Residues 1127 to 1153 constitute an intramembrane region (pore-forming); that stretch reads VGNGFLSLFQVATFNGWISIMNSAIDS. The Extracellular portion of the chain corresponds to 1154-1166; that stretch reads VGVYMQPSFEHSL. Residues 1167–1201 traverse the membrane as a helical segment; that stretch reads HMYTYFIIFVVFGLFLPLCMLIGVIIRNFNKQKIK. At 1202–1249 the chain is on the cytoplasmic side; it reads QGGSNIFITVKQKKQYRALKKLLYADSQKPAARPRNKFQGFICDVVTH. The IV repeat unit spans residues 1232–1530; it reads AARPRNKFQG…WNRFDPDRTQ (299 aa). The chain crosses the membrane as a helical span at residues 1250 to 1271; the sequence is RVFNVIIILLICFQATTIMIQN. Residues 1272-1275 are Extracellular-facing; sequence DEQS. Residues 1276–1304 traverse the membrane as a helical segment; sequence PQIETAVFWMNSLFTMLFTLECILKLTAF. The Cytoplasmic segment spans residues 1305 to 1311; it reads RCHYFTS. Residues 1312-1337 form a helical membrane-spanning segment; that stretch reads AWNVHDFMVVVFSITGLLLPLSIGQY. The Extracellular portion of the chain corresponds to 1338-1340; that stretch reads FVP. A helical transmembrane segment spans residues 1341 to 1361; sequence PSLVQLLLLSRIIHVLRPGKG. The Cytoplasmic portion of the chain corresponds to 1362–1376; that stretch reads PKVFHDLMLPLMLSL. The helical transmembrane segment at 1377 to 1401 threads the bilayer; the sequence is PALLNIALLIFLVMFIYAIFGMYNF. The Extracellular segment spans residues 1402 to 1419; that stretch reads AYVKKEAGINDVSNFETF. The segment at residues 1420–1443 is an intramembrane region (pore-forming); it reads GSSMLCLFQVTTFSGWDGMLDAIF. Residues 1444–1467 are Extracellular-facing; it reads NSQWSDCDPDKINPGTQVRGDCGS. A disulfide bridge links C1450 with C1465. A helical membrane pass occupies residues 1468–1503; that stretch reads PSVGIFYFVSYILISWLIIVNMYVVLIMEFLSIPSK. The Cytoplasmic portion of the chain corresponds to 1504 to 1680; it reads RKNRTLSEDD…EEKASIQTQI (177 aa). The tract at residues 1646-1680 is disordered; sequence KIQDIPEIDDGREDPNSKGVHSGQIEEKASIQTQI.

It belongs to the sodium channel (TC 1.A.1.10) family. SCN7A subfamily. In terms of assembly, the sodium channel formed by SCN7A is probably a heterooligomeric complex consisting of the ion conducting pore forming alpha subunit SCN7A and regulatory beta subunits such as SCN3B. Interacts with ATP1A1; activates ATP1A1 and thereby indirectly signals to nearby neurons to regulate sodium homeostasis. In terms of tissue distribution, not tissue specific but widely expressed.

The protein resides in the cell membrane. It carries out the reaction Na(+)(in) = Na(+)(out). Its function is as follows. Sodium leak channel functioning as an osmosensor regulating sodium ion levels in various tissues and organs. While most sodium channels are voltage-gated, SCN7A is not and lets sodium flow through membrane along its concentration gradient. In glial cells of the central nervous system, senses body-fluid sodium levels and controls salt intake behavior as well as voluntary water intake through activation of nearby neurons to maintain appropriate sodium levels in the body. By mediating sodium influx into keratinocytes, also plays a role in skin barrier homeostasis. This chain is Sodium channel protein type 7 subunit alpha, found in Rattus norvegicus (Rat).